Reading from the N-terminus, the 207-residue chain is Putative threonylcarbamoyl-AMP synthase (207 aa).

In terms of domain architecture, YrdC-like spans glutamate 15–isoleucine 199.

It belongs to the SUA5 family.

The protein resides in the cytoplasm. The catalysed reaction is L-threonine + hydrogencarbonate + ATP = L-threonylcarbamoyladenylate + diphosphate + H2O. Its function is as follows. Required for the formation of a threonylcarbamoyl group on adenosine at position 37 (t(6)A37) in tRNAs that read codons beginning with adenine. Catalyzes the conversion of L-threonine, HCO(3)(-)/CO(2) and ATP to give threonylcarbamoyl-AMP (TC-AMP) as the acyladenylate intermediate, with the release of diphosphate. The sequence is that of Putative threonylcarbamoyl-AMP synthase from Methanocaldococcus jannaschii (strain ATCC 43067 / DSM 2661 / JAL-1 / JCM 10045 / NBRC 100440) (Methanococcus jannaschii).